Here is a 425-residue protein sequence, read N- to C-terminus: Glutamyl-tRNA reductase (425 aa).

Residues 49-52, Ser107, 112-114, and Gln118 contribute to the substrate site; these read TCNR and EPQ. The active-site Nucleophile is Cys50. Position 187 to 192 (187 to 192) interacts with NADP(+); sequence GAGETI.

The protein belongs to the glutamyl-tRNA reductase family. As to quaternary structure, homodimer.

The catalysed reaction is (S)-4-amino-5-oxopentanoate + tRNA(Glu) + NADP(+) = L-glutamyl-tRNA(Glu) + NADPH + H(+). Its pathway is porphyrin-containing compound metabolism; protoporphyrin-IX biosynthesis; 5-aminolevulinate from L-glutamyl-tRNA(Glu): step 1/2. Its function is as follows. Catalyzes the NADPH-dependent reduction of glutamyl-tRNA(Glu) to glutamate 1-semialdehyde (GSA). The polypeptide is Glutamyl-tRNA reductase (Pseudomonas putida (strain ATCC 700007 / DSM 6899 / JCM 31910 / BCRC 17059 / LMG 24140 / F1)).